The chain runs to 444 residues: uncharacterized protein (444 aa).

Positions 164–381 (GAYGKSFLLE…EKALKKEGIR (218 aa)) constitute a Radical SAM core domain. Residues Cys-178, Cys-182, and Cys-185 each contribute to the [4Fe-4S] cluster site.

It depends on [4Fe-4S] cluster as a cofactor.

This is an uncharacterized protein from Methanocaldococcus jannaschii (strain ATCC 43067 / DSM 2661 / JAL-1 / JCM 10045 / NBRC 100440) (Methanococcus jannaschii).